The chain runs to 397 residues: Acetate kinase (397 aa).

Asn-8 is a binding site for Mg(2+). Lys-15 lines the ATP pocket. Arg-89 is a binding site for substrate. Catalysis depends on Asp-146, which acts as the Proton donor/acceptor. ATP-binding positions include 206-210 (HLGNG), 281-283 (DLR), and 329-333 (GIGEN). Glu-382 provides a ligand contact to Mg(2+).

This sequence belongs to the acetokinase family. As to quaternary structure, homodimer. It depends on Mg(2+) as a cofactor. Requires Mn(2+) as cofactor.

The protein localises to the cytoplasm. It catalyses the reaction acetate + ATP = acetyl phosphate + ADP. It participates in metabolic intermediate biosynthesis; acetyl-CoA biosynthesis; acetyl-CoA from acetate: step 1/2. Functionally, catalyzes the formation of acetyl phosphate from acetate and ATP. Can also catalyze the reverse reaction. The sequence is that of Acetate kinase from Anoxybacillus flavithermus (strain DSM 21510 / WK1).